We begin with the raw amino-acid sequence, 460 residues long: MNKPITPSTYVRCLNVGLIRKLSDFIDPQEGWKKLAVAIKKPSGDDRYNQFHIRRFEALLQTGKSPTSELLFDWGTTNCTVGDLVDLLIQNEFFAPASLLLPDAVPKTANTLPSKEAITVQQKQMPFCDKDRTLMTPVQNLEQSYMPPDSSSPENKSLEVSDTRFHSFSFYELKNVTNNFDERPISVGGNKMGEGGFGVVYKGYVNNTTVAVKKLAAMVDITTEELKQQFDQEIKVMAKCQHENLVELLGFSSDGDDLCLVYVYMPNGSLLDRLSCLDGTPPLSWHMRCKIAQGAANGINFLHENHHIHRDIKSANILLDEAFTAKISDFGLARASEKFAQTVMTSRIVGTTAYMAPEALRGEITPKSDIYSFGVVLLEIITGLPAVDEHREPQLLLDIKEEIEDEEKTIEDYIDKKMNDADSTSVEAMYSVASQCLHEKKNKRPDIKKVQQLLQEMTAS.

An N-acetylmethionine modification is found at M1. A Death domain is found at 20-104 (RKLSDFIDPQ…APASLLLPDA (85 aa)). At K34 the chain carries N6-acetyllysine. Positions 186 to 454 (SVGGNKMGEG…PDIKKVQQLL (269 aa)) constitute a Protein kinase domain. Residues 192–200 (MGEGGFGVV) and K213 contribute to the ATP site. The Proton acceptor role is filled by D311. Residues 313–316 (KSAN) and D329 contribute to the ATP site. Phosphothreonine occurs at positions 342 and 345. Phosphoserine is present on S346.

This sequence belongs to the protein kinase superfamily. TKL Ser/Thr protein kinase family. Pelle subfamily. As to quaternary structure, associates with MYD88 and IRAK2 to form a ternary complex called the Myddosome. Once phosphorylated, IRAK4 dissociates from the receptor complex and then associates with the TNF receptor-associated factor 6 (TRAF6), IRAK1, and PELI1; this intermediate complex is required for subsequent NF-kappa-B activation. Direct binding of SMAD6 to PELI1 prevents complex formation and hence negatively regulates IL1R-TLR signaling and eventually NF-kappa-B-mediated gene expression. Interacts with IL1RL1. Interacts (when phosphorylated) with IRAK1. May interact (when phosphorylated) with IRAK3. Mg(2+) serves as cofactor. Post-translationally, phosphorylated.

The protein localises to the cytoplasm. The catalysed reaction is L-seryl-[protein] + ATP = O-phospho-L-seryl-[protein] + ADP + H(+). It carries out the reaction L-threonyl-[protein] + ATP = O-phospho-L-threonyl-[protein] + ADP + H(+). Functionally, serine/threonine-protein kinase that plays a critical role in initiating innate immune response against foreign pathogens. Involved in Toll-like receptor (TLR) and IL-1R signaling pathways. Is rapidly recruited by MYD88 to the receptor-signaling complex upon TLR activation to form the Myddosome together with IRAK2. Phosphorylates initially IRAK1, thus stimulating the kinase activity and intensive autophosphorylation of IRAK1. Phosphorylates E3 ubiquitin ligases Pellino proteins (PELI1, PELI2 and PELI3) to promote pellino-mediated polyubiquitination of IRAK1. Then, the ubiquitin-binding domain of IKBKG/NEMO binds to polyubiquitinated IRAK1 bringing together the IRAK1-MAP3K7/TAK1-TRAF6 complex and the NEMO-IKKA-IKKB complex. In turn, MAP3K7/TAK1 activates IKKs (CHUK/IKKA and IKBKB/IKKB) leading to NF-kappa-B nuclear translocation and activation. Alternatively, phosphorylates TIRAP to promote its ubiquitination and subsequent degradation. Phosphorylates NCF1 and regulates NADPH oxidase activation after LPS stimulation suggesting a similar mechanism during microbial infections. The polypeptide is Interleukin-1 receptor-associated kinase 4 (IRAK4) (Homo sapiens (Human)).